The following is a 403-amino-acid chain: 4,4'-dithiodibutanoate disulfide reductase (403 aa).

Gln-103 serves as a coordination point for FMN. Catalysis depends on Tyr-173, which acts as the Proton donor. 348–349 (AR) contacts FMN.

The protein belongs to the NADH:flavin oxidoreductase/NADH oxidase family. The cofactor is FMN.

It carries out the reaction 2 4-sulfanylbutanoate + NAD(+) = 4,4'-disulfanyldibutanoate + NADH + H(+). With respect to regulation, inactivated by cobalt, nickel and zinc ions. Involved in the degradation of the organic disulfide 4,4'-dithiodibutyric acid (DTDB). Catalyzes the initial cleavage of DTDB into 2 molecules of 4-mercaptobutyric acid (4MB). Low activities are observed with other disulfide compounds, such as 3,3'-dithiodipropionic acid DTDP, 3,3'-thiodipropionic acid TDP and DTNB. This chain is 4,4'-dithiodibutanoate disulfide reductase, found in Rhodococcus erythropolis (Arthrobacter picolinophilus).